Here is an 83-residue protein sequence, read N- to C-terminus: Apolipoprotein C-I, basic form (83 aa).

Positions 1–26 (MRLFLSLPVLVVVLSMVLEGPAPVQG) are cleaved as a signal peptide.

It belongs to the apolipoprotein C1 family.

It is found in the secreted. Its function is as follows. Inhibitor of lipoprotein binding to the low density lipoprotein (LDL) receptor, LDL receptor-related protein, and very low density lipoprotein (VLDL) receptor. Associates with high density lipoproteins (HDL) and the triacylglycerol-rich lipoproteins in the plasma and makes up about 10% of the protein of the VLDL and 2% of that of HDL. Appears to interfere directly with fatty acid uptake and is also the major plasma inhibitor of cholesteryl ester transfer protein (CETP). Binds free fatty acids and reduces their intracellular esterification. Modulates the interaction of APOE with beta-migrating VLDL and inhibits binding of beta-VLDL to the LDL receptor-related protein. This Papio anubis (Olive baboon) protein is Apolipoprotein C-I, basic form (APOC1).